A 208-amino-acid polypeptide reads, in one-letter code: UPF0637 protein BcerKBAB4_3786 (208 aa).

Belongs to the UPF0637 family.

This Bacillus mycoides (strain KBAB4) (Bacillus weihenstephanensis) protein is UPF0637 protein BcerKBAB4_3786.